The chain runs to 611 residues: Threonine--tRNA ligase (611 aa).

Residues 1 to 27 (MAGPEPEPVSSAAATTPAPSAPVVLPK) are disordered. The segment covering 8-24 (PVSSAAATTPAPSAPVV) has biased composition (low complexity). Positions 209 to 502 (DHRRIGKDLD…MTENYAGDYP (294 aa)) are catalytic. The Zn(2+) site is built by Cys302, His353, and His479.

Belongs to the class-II aminoacyl-tRNA synthetase family. Homodimer. Zn(2+) serves as cofactor.

It localises to the cytoplasm. It carries out the reaction tRNA(Thr) + L-threonine + ATP = L-threonyl-tRNA(Thr) + AMP + diphosphate + H(+). Catalyzes the attachment of threonine to tRNA(Thr) in a two-step reaction: L-threonine is first activated by ATP to form Thr-AMP and then transferred to the acceptor end of tRNA(Thr). Also edits incorrectly charged L-seryl-tRNA(Thr). The sequence is that of Threonine--tRNA ligase from Synechococcus sp. (strain CC9605).